A 32-amino-acid polypeptide reads, in one-letter code: Photosystem I reaction center subunit XII (32 aa).

A helical transmembrane segment spans residues 9–31 (VYVALVSALITSFLAVRLGLALY).

Belongs to the PsaM family.

It is found in the plastid. The protein localises to the chloroplast thylakoid membrane. This is Photosystem I reaction center subunit XII from Chaetosphaeridium globosum (Charophycean green alga).